An 88-amino-acid chain; its full sequence is Apolipoprotein C-I (88 aa).

Residues 1–26 (MRLFISLPILIVVLAMALEGPAPAQA) form the signal peptide.

This sequence belongs to the apolipoprotein C1 family.

It localises to the secreted. Its function is as follows. Inhibitor of lipoprotein binding to the low density lipoprotein (LDL) receptor, LDL receptor-related protein, and very low density lipoprotein (VLDL) receptor. Associates with high density lipoproteins (HDL) and the triacylglycerol-rich lipoproteins in the plasma and makes up about 10% of the protein of the VLDL and 2% of that of HDL. Appears to interfere directly with fatty acid uptake and is also the major plasma inhibitor of cholesteryl ester transfer protein (CETP). Modulates the interaction of APOE with beta-migrating VLDL and inhibits binding of beta-VLDL to the LDL receptor-related protein. Binds free fatty acids and reduces their intracellular esterification. This Neotoma lepida (Desert woodrat) protein is Apolipoprotein C-I (Apoc1).